The sequence spans 324 residues: GTPase Era (324 aa).

Positions 31 to 199 (KSGFIGIIGR…QELLVEHLEH (169 aa)) constitute an Era-type G domain. The segment at 39-46 (GRPNVGKS) is G1. 39–46 (GRPNVGKS) contacts GTP. Positions 65 to 69 (QTTRN) are G2. Residues 86–89 (DTPG) are G3. GTP is bound by residues 86-90 (DTPGI) and 148-151 (NKVD). A G4 region spans residues 148–151 (NKVD). The segment at 178–180 (FSA) is G5. The region spanning 230–306 (TREEVPHSVA…YLELFVKVQP (77 aa)) is the KH type-2 domain.

Belongs to the TRAFAC class TrmE-Era-EngA-EngB-Septin-like GTPase superfamily. Era GTPase family. Monomer.

It is found in the cytoplasm. It localises to the cell inner membrane. Its function is as follows. An essential GTPase that binds both GDP and GTP, with rapid nucleotide exchange. Plays a role in 16S rRNA processing and 30S ribosomal subunit biogenesis and possibly also in cell cycle regulation and energy metabolism. In Nostoc sp. (strain PCC 7120 / SAG 25.82 / UTEX 2576), this protein is GTPase Era.